Reading from the N-terminus, the 404-residue chain is Ammonium transporter (404 aa).

The next 9 membrane-spanning stretches (helical) occupy residues 7–27 (VFMF…ALFY), 44–64 (FSSI…LAFA), 96–116 (LFMM…SGAF), 125–145 (FLLF…HWVW), 158–178 (FAGG…LAIV), 227–247 (INTN…EWII), 254–274 (LGAV…AGFV), 277–297 (FASI…VFSL), and 352–372 (IVAI…IIKI).

Belongs to the ammonia transporter channel (TC 1.A.11.2) family. In terms of assembly, interacts with NrgB for a correct localization of the latter. GlnK-AmtB complex interacts with TnrA.

It is found in the cell membrane. In terms of biological role, functions as an ammonium and methylammonium transporter in the absence of glutamine. Required for ammonium utilization at low concentrations or at low pH values, when ammonium is the single nitrogen source. Required for binding of NrgB to the membrane. Interaction between GlnK-AmtB complex and TnrA protects TnrA from proteolytic degradation. The polypeptide is Ammonium transporter (Bacillus subtilis (strain 168)).